The following is a 140-amino-acid chain: Ergosterol biosynthetic protein 28 homolog (140 aa).

4 helical membrane-spanning segments follow: residues 4–24 (FLNVLRSWLVMVSIIAMGNTL), 52–72 (TFGIWTLLSSVIRCLCAIDIH), 79–99 (ITLWTFLLALGHFLSELFVYG), and 105–125 (IGVLAPLMVASFSILGMLVGL).

Belongs to the ERG28 family. As to expression, ubiquitous; strongly expressed in testis and some cancer cell lines.

It is found in the endoplasmic reticulum membrane. This chain is Ergosterol biosynthetic protein 28 homolog, found in Homo sapiens (Human).